The chain runs to 431 residues: Phosphomethylpyrimidine synthase (431 aa).

Substrate contacts are provided by residues Asn66, Met95, Tyr124, His163, 185–187 (SRG), 226–229 (DGLR), and Glu265. His269 provides a ligand contact to Zn(2+). Tyr292 contributes to the substrate binding site. His333 contributes to the Zn(2+) binding site. The [4Fe-4S] cluster site is built by Cys408, Cys411, and Cys415.

The protein belongs to the ThiC family. Requires [4Fe-4S] cluster as cofactor.

It carries out the reaction 5-amino-1-(5-phospho-beta-D-ribosyl)imidazole + S-adenosyl-L-methionine = 4-amino-2-methyl-5-(phosphooxymethyl)pyrimidine + CO + 5'-deoxyadenosine + formate + L-methionine + 3 H(+). It functions in the pathway cofactor biosynthesis; thiamine diphosphate biosynthesis. Catalyzes the synthesis of the hydroxymethylpyrimidine phosphate (HMP-P) moiety of thiamine from aminoimidazole ribotide (AIR) in a radical S-adenosyl-L-methionine (SAM)-dependent reaction. In Dehalococcoides mccartyi (strain CBDB1), this protein is Phosphomethylpyrimidine synthase.